The following is a 556-amino-acid chain: Glutamine--tRNA ligase (556 aa).

Residues 34–44 carry the 'HIGH' region motif; sequence PEPNGYLHIGH. Residues 35-37 and 41-47 each bind ATP; these read EPN and HIGHAKS. Residues Asp67 and Tyr212 each coordinate L-glutamine. Residues Thr231, 263–264, and 271–273 contribute to the ATP site; these read RL and MSK. Residues 270–274 carry the 'KMSKS' region motif; it reads VMSKR.

The protein belongs to the class-I aminoacyl-tRNA synthetase family. Monomer.

The protein resides in the cytoplasm. It carries out the reaction tRNA(Gln) + L-glutamine + ATP = L-glutaminyl-tRNA(Gln) + AMP + diphosphate. This Nitrosomonas europaea (strain ATCC 19718 / CIP 103999 / KCTC 2705 / NBRC 14298) protein is Glutamine--tRNA ligase.